Here is a 281-residue protein sequence, read N- to C-terminus: Histidine biosynthesis bifunctional protein hisIE, chloroplastic (281 aa).

The transit peptide at 1 to 50 (MAVSYNALAQSLARSSCFIPKPYSFRDTKLRSRSNVVFACNDNKNIALQA) directs the protein to the chloroplast. The tract at residues 51 to 178 (KVDNLLDRIK…NKLALTTLYS (128 aa)) is phosphoribosyl-AMP cyclohydrolase. The segment at 179–281 (LESIISKRKE…GIEEKQNRTK (103 aa)) is phosphoribosyl-ATP pyrophosphohydrolase.

In the N-terminal section; belongs to the PRA-CH family. It in the C-terminal section; belongs to the PRA-PH family. In terms of tissue distribution, ubiquitously expressed throughout development.

The protein resides in the plastid. It localises to the chloroplast. It carries out the reaction 1-(5-phospho-beta-D-ribosyl)-ATP + H2O = 1-(5-phospho-beta-D-ribosyl)-5'-AMP + diphosphate + H(+). The enzyme catalyses 1-(5-phospho-beta-D-ribosyl)-5'-AMP + H2O = 1-(5-phospho-beta-D-ribosyl)-5-[(5-phospho-beta-D-ribosylamino)methylideneamino]imidazole-4-carboxamide. Its pathway is amino-acid biosynthesis; L-histidine biosynthesis; L-histidine from 5-phospho-alpha-D-ribose 1-diphosphate: step 2/9. It participates in amino-acid biosynthesis; L-histidine biosynthesis; L-histidine from 5-phospho-alpha-D-ribose 1-diphosphate: step 3/9. This Arabidopsis thaliana (Mouse-ear cress) protein is Histidine biosynthesis bifunctional protein hisIE, chloroplastic (HISN2).